The primary structure comprises 897 residues: Isoleucine--tRNA ligase (897 aa).

The short motif at 59–69 is the 'HIGH' region element; it reads PYANGDIHVGH. Residue Glu-552 participates in L-isoleucyl-5'-AMP binding. The 'KMSKS' region motif lies at 593-597; it reads KMSKS. Residue Lys-596 coordinates ATP. 4 residues coordinate Zn(2+): Cys-872, Cys-875, Cys-890, and Cys-893.

It belongs to the class-I aminoacyl-tRNA synthetase family. IleS type 1 subfamily. Monomer. The cofactor is Zn(2+).

The protein resides in the cytoplasm. It catalyses the reaction tRNA(Ile) + L-isoleucine + ATP = L-isoleucyl-tRNA(Ile) + AMP + diphosphate. Functionally, catalyzes the attachment of isoleucine to tRNA(Ile). As IleRS can inadvertently accommodate and process structurally similar amino acids such as valine, to avoid such errors it has two additional distinct tRNA(Ile)-dependent editing activities. One activity is designated as 'pretransfer' editing and involves the hydrolysis of activated Val-AMP. The other activity is designated 'posttransfer' editing and involves deacylation of mischarged Val-tRNA(Ile). The polypeptide is Isoleucine--tRNA ligase (Mycoplasmoides gallisepticum (strain R(low / passage 15 / clone 2)) (Mycoplasma gallisepticum)).